We begin with the raw amino-acid sequence, 507 residues long: Zinc finger CCCH-type with G patch domain-containing protein (507 aa).

The residue at position 1 (Met-1) is an N-acetylmethionine. A disordered region spans residues 88 to 125 (PVDPGNDSKTVPGSEVQPTPTSSALEEEEEDPDLEDLS). The segment covering 94–111 (DSKTVPGSEVQPTPTSSA) has biased composition (polar residues). Residues 112-123 (LEEEEEDPDLED) are compositionally biased toward acidic residues. The segment at 170–196 (KSLKPCPFFLEGKCRFKENCRFSHGQL) adopts a C3H1-type zinc-finger fold. The tract at residues 264 to 283 (LRTEATDSSDSDTGDASDSS) is disordered. Ser-272 carries the phosphoserine modification. Residue Thr-276 is modified to Phosphothreonine. A G-patch domain is found at 309 to 355 (TRGIGSKLLVKMGYEFGKGLGRHAEGRVEPIHAVVLPRGKSLDQCAE). The residue at position 349 (Ser-349) is a Phosphoserine. 2 disordered regions span residues 359–389 (KKTKQGQTGASRPPRCRRRSSRPEGRPPPRN) and 486–507 (AQEADLQRKQRKADTHRKMTEF). Residues 487–507 (QEADLQRKQRKADTHRKMTEF) are compositionally biased toward basic and acidic residues.

As to quaternary structure, interacts with CHD4/Mi-2; the interaction is direct.

The protein resides in the nucleus. Its function is as follows. Transcription repressor that specifically binds the 5'-GGAG[GA]A[GA]A-3' consensus sequence. Represses transcription by recruiting the chromatin multiprotein complex NuRD to target promoters. Negatively regulates expression of EGFR, a gene involved in cell proliferation, survival and migration. Its ability to repress genes of the EGFR pathway suggest it may act as a tumor suppressor. This chain is Zinc finger CCCH-type with G patch domain-containing protein (Zgpat), found in Rattus norvegicus (Rat).